The sequence spans 434 residues: Nicotinate phosphoribosyltransferase (434 aa).

His242 is modified (phosphohistidine; by autocatalysis).

This sequence belongs to the NAPRTase family. Transiently phosphorylated on a His residue during the reaction cycle. Phosphorylation strongly increases the affinity for substrates and increases the rate of nicotinate D-ribonucleotide production. Dephosphorylation regenerates the low-affinity form of the enzyme, leading to product release.

The enzyme catalyses nicotinate + 5-phospho-alpha-D-ribose 1-diphosphate + ATP + H2O = nicotinate beta-D-ribonucleotide + ADP + phosphate + diphosphate. Its pathway is cofactor biosynthesis; NAD(+) biosynthesis; nicotinate D-ribonucleotide from nicotinate: step 1/1. Catalyzes the synthesis of beta-nicotinate D-ribonucleotide from nicotinate and 5-phospho-D-ribose 1-phosphate at the expense of ATP. This is Nicotinate phosphoribosyltransferase from Brucella canis (strain ATCC 23365 / NCTC 10854 / RM-666).